The primary structure comprises 38 residues: Photosystem II reaction center protein L (38 aa).

Residues 17–37 form a helical membrane-spanning segment; that stretch reads SLYWGLLLIFVLAVLFSNYSF.

It belongs to the PsbL family. PSII is composed of 1 copy each of membrane proteins PsbA, PsbB, PsbC, PsbD, PsbE, PsbF, PsbH, PsbI, PsbJ, PsbK, PsbL, PsbM, PsbT, PsbX, PsbY, PsbZ, Psb30/Ycf12, at least 3 peripheral proteins of the oxygen-evolving complex and a large number of cofactors. It forms dimeric complexes.

The protein localises to the plastid. It is found in the chloroplast thylakoid membrane. Functionally, one of the components of the core complex of photosystem II (PSII). PSII is a light-driven water:plastoquinone oxidoreductase that uses light energy to abstract electrons from H(2)O, generating O(2) and a proton gradient subsequently used for ATP formation. It consists of a core antenna complex that captures photons, and an electron transfer chain that converts photonic excitation into a charge separation. This subunit is found at the monomer-monomer interface and is required for correct PSII assembly and/or dimerization. The protein is Photosystem II reaction center protein L of Bowenia serrulata (Byfield fern).